A 299-amino-acid polypeptide reads, in one-letter code: N-acetylmuramic acid 6-phosphate etherase (299 aa).

The region spanning 54 to 217 (TIAQYKKGGR…STITMVGVGK (164 aa)) is the SIS domain. Glu82 (proton donor) is an active-site residue. Residue Glu113 is part of the active site.

This sequence belongs to the GCKR-like family. MurNAc-6-P etherase subfamily. As to quaternary structure, homodimer.

It carries out the reaction N-acetyl-D-muramate 6-phosphate + H2O = N-acetyl-D-glucosamine 6-phosphate + (R)-lactate. The protein operates within amino-sugar metabolism; N-acetylmuramate degradation. In terms of biological role, specifically catalyzes the cleavage of the D-lactyl ether substituent of MurNAc 6-phosphate, producing GlcNAc 6-phosphate and D-lactate. In Staphylococcus aureus (strain USA300), this protein is N-acetylmuramic acid 6-phosphate etherase.